Here is a 207-residue protein sequence, read N- to C-terminus: Ribosomal RNA small subunit methyltransferase G (207 aa).

S-adenosyl-L-methionine-binding positions include glycine 73, leucine 78, valine 124–glutamate 125, and arginine 139.

It belongs to the methyltransferase superfamily. RNA methyltransferase RsmG family.

It localises to the cytoplasm. It catalyses the reaction guanosine(527) in 16S rRNA + S-adenosyl-L-methionine = N(7)-methylguanosine(527) in 16S rRNA + S-adenosyl-L-homocysteine. Functionally, specifically methylates the N7 position of guanine in position 527 of 16S rRNA. This Escherichia fergusonii (strain ATCC 35469 / DSM 13698 / CCUG 18766 / IAM 14443 / JCM 21226 / LMG 7866 / NBRC 102419 / NCTC 12128 / CDC 0568-73) protein is Ribosomal RNA small subunit methyltransferase G.